Reading from the N-terminus, the 241-residue chain is Proteasome subunit alpha type-5 (241 aa).

An N-acetylmethionine modification is found at methionine 1. Residue serine 16 is modified to Phosphoserine. At threonine 55 the chain carries Phosphothreonine. A phosphoserine mark is found at serine 56 and serine 63. O-linked (GlcNAc) serine glycosylation occurs at serine 198.

The protein belongs to the peptidase T1A family. The 26S proteasome consists of a 20S proteasome core and two 19S regulatory subunits. The 20S proteasome core is a barrel-shaped complex made of 28 subunits that are arranged in four stacked rings. The two outer rings are each formed by seven alpha subunits, and the two inner rings are formed by seven beta subunits. The proteolytic activity is exerted by three beta-subunits PSMB5, PSMB6 and PSMB7. PSMA5 interacts directly with the PSMG1-PSMG2 heterodimer which promotes 20S proteasome assembly.

The protein resides in the cytoplasm. The protein localises to the nucleus. Functionally, component of the 20S core proteasome complex involved in the proteolytic degradation of most intracellular proteins. This complex plays numerous essential roles within the cell by associating with different regulatory particles. Associated with two 19S regulatory particles, forms the 26S proteasome and thus participates in the ATP-dependent degradation of ubiquitinated proteins. The 26S proteasome plays a key role in the maintenance of protein homeostasis by removing misfolded or damaged proteins that could impair cellular functions, and by removing proteins whose functions are no longer required. Associated with the PA200 or PA28, the 20S proteasome mediates ubiquitin-independent protein degradation. This type of proteolysis is required in several pathways including spermatogenesis (20S-PA200 complex) or generation of a subset of MHC class I-presented antigenic peptides (20S-PA28 complex). This chain is Proteasome subunit alpha type-5 (PSMA5), found in Bos taurus (Bovine).